We begin with the raw amino-acid sequence, 86 residues long: Small ribosomal subunit protein bS16 (86 aa).

This sequence belongs to the bacterial ribosomal protein bS16 family.

This chain is Small ribosomal subunit protein bS16, found in Hamiltonella defensa subsp. Acyrthosiphon pisum (strain 5AT).